Reading from the N-terminus, the 252-residue chain is uncharacterized protein (252 aa).

The protein belongs to the GSP E family.

This is an uncharacterized protein from Methanocaldococcus jannaschii (strain ATCC 43067 / DSM 2661 / JAL-1 / JCM 10045 / NBRC 100440) (Methanococcus jannaschii).